The primary structure comprises 185 residues: Putative 3-methyladenine DNA glycosylase (185 aa).

It belongs to the DNA glycosylase MPG family.

This Rhizobium meliloti (strain 1021) (Ensifer meliloti) protein is Putative 3-methyladenine DNA glycosylase.